A 149-amino-acid polypeptide reads, in one-letter code: Large ribosomal subunit protein bL9 (149 aa).

Belongs to the bacterial ribosomal protein bL9 family.

In terms of biological role, binds to the 23S rRNA. The polypeptide is Large ribosomal subunit protein bL9 (Haemophilus influenzae (strain PittEE)).